A 192-amino-acid polypeptide reads, in one-letter code: Probable protein adenylyltransferase y4lH (192 aa).

The region spanning 52 to 190 (LDFAHYRALH…LAPLAAEIRR (139 aa)) is the Fido domain. ATP contacts are provided by residues 82-83 (KG) and 139-141 (GNG).

It belongs to the fic family.

The enzyme catalyses L-tyrosyl-[protein] + ATP = O-(5'-adenylyl)-L-tyrosyl-[protein] + diphosphate. The catalysed reaction is L-threonyl-[protein] + ATP = 3-O-(5'-adenylyl)-L-threonyl-[protein] + diphosphate. Functionally, probable adenylyltransferase that mediates the addition of adenosine 5'-monophosphate (AMP) to specific residues of target proteins. This is Probable protein adenylyltransferase y4lH from Sinorhizobium fredii (strain NBRC 101917 / NGR234).